The following is a 372-amino-acid chain: Putative actin-27 (372 aa).

It belongs to the actin family.

It localises to the cytoplasm. It is found in the cytoskeleton. It catalyses the reaction ATP + H2O = ADP + phosphate + H(+). Its function is as follows. Actins are highly conserved proteins that are involved in various types of cell motility and are ubiquitously expressed in all eukaryotic cells. Multiple isoforms are involved in various cellular functions such as cytoskeleton structure, cell mobility, chromosome movement and muscle contraction. This chain is Putative actin-27 (act27), found in Dictyostelium discoideum (Social amoeba).